Reading from the N-terminus, the 600-residue chain is Brain-enriched guanylate kinase-associated protein (600 aa).

Met1 carries the N-acetylmethionine modification. Position 137 is a phosphotyrosine (Tyr137). The tract at residues 192–222 is disordered; the sequence is PGSLSSRMSDASARDLGYRDGVEKSGPRPPY. At Ser200 the chain carries Phosphoserine. The segment covering 203-217 has biased composition (basic and acidic residues); sequence SARDLGYRDGVEKSG. A phosphoserine mark is found at Ser229 and Ser246. Thr249 carries the phosphothreonine modification. A Phosphoserine modification is found at Ser265. The tract at residues 298 to 317 is disordered; the sequence is SSYSSFSATSEEKEHAQAGT. A Phosphoserine modification is found at Ser372. Residue Arg380 is modified to Asymmetric dimethylarginine. Phosphoserine occurs at positions 463, 473, 483, 485, 508, 510, and 514. Residues 537 to 590 are disordered; it reads GAGSSPEPEHGSRESLEPSSMEASPEMHPPTRLSPQQAFPRTGGSGLSRKDSLT. Residues 543-552 are compositionally biased toward basic and acidic residues; that stretch reads EPEHGSRESL. Residues Ser560 and Ser570 each carry the phosphoserine modification.

In terms of assembly, interacts with DLG4 and DLGAP1 and forms a ternary complex.

The protein localises to the cytoplasm. Its subcellular location is the membrane. May sustain the structure of the postsynaptic density (PSD). The sequence is that of Brain-enriched guanylate kinase-associated protein (Begain) from Mus musculus (Mouse).